Reading from the N-terminus, the 177-residue chain is Large ribosomal subunit protein uL6 (177 aa).

This sequence belongs to the universal ribosomal protein uL6 family. Part of the 50S ribosomal subunit.

In terms of biological role, this protein binds to the 23S rRNA, and is important in its secondary structure. It is located near the subunit interface in the base of the L7/L12 stalk, and near the tRNA binding site of the peptidyltransferase center. The protein is Large ribosomal subunit protein uL6 of Novosphingobium aromaticivorans (strain ATCC 700278 / DSM 12444 / CCUG 56034 / CIP 105152 / NBRC 16084 / F199).